A 126-amino-acid chain; its full sequence is uncharacterized protein (126 aa).

This is an uncharacterized protein from Escherichia coli (strain K12).